A 284-amino-acid chain; its full sequence is Bifunctional protein FolD (284 aa).

NADP(+) is bound by residues 164 to 166 (GTS) and isoleucine 230.

The protein belongs to the tetrahydrofolate dehydrogenase/cyclohydrolase family. As to quaternary structure, homodimer.

The enzyme catalyses (6R)-5,10-methylene-5,6,7,8-tetrahydrofolate + NADP(+) = (6R)-5,10-methenyltetrahydrofolate + NADPH. It catalyses the reaction (6R)-5,10-methenyltetrahydrofolate + H2O = (6R)-10-formyltetrahydrofolate + H(+). It functions in the pathway one-carbon metabolism; tetrahydrofolate interconversion. Its function is as follows. Catalyzes the oxidation of 5,10-methylenetetrahydrofolate to 5,10-methenyltetrahydrofolate and then the hydrolysis of 5,10-methenyltetrahydrofolate to 10-formyltetrahydrofolate. This Mycoplasma capricolum subsp. capricolum (strain California kid / ATCC 27343 / NCTC 10154) protein is Bifunctional protein FolD.